Reading from the N-terminus, the 322-residue chain is ATP-dependent 6-phosphofructokinase (322 aa).

G11 provides a ligand contact to ATP. 21-25 (RAVVR) lines the ADP pocket. ATP is bound by residues 72-73 (RC) and 102-105 (GDGS). D103 contacts Mg(2+). 127-129 (TID) contacts substrate. D129 serves as the catalytic Proton acceptor. R156 is an ADP binding site. Residues R164 and 171–173 (MGR) each bind substrate. Residues 187-189 (GAE), R213, and 215-217 (KKH) each bind ADP. Substrate contacts are provided by residues E224, R245, and 251–254 (HIQR).

Belongs to the phosphofructokinase type A (PFKA) family. ATP-dependent PFK group I subfamily. Prokaryotic clade 'B1' sub-subfamily. As to quaternary structure, homotetramer. Mg(2+) is required as a cofactor.

Its subcellular location is the cytoplasm. It carries out the reaction beta-D-fructose 6-phosphate + ATP = beta-D-fructose 1,6-bisphosphate + ADP + H(+). It participates in carbohydrate degradation; glycolysis; D-glyceraldehyde 3-phosphate and glycerone phosphate from D-glucose: step 3/4. With respect to regulation, allosterically activated by ADP and other diphosphonucleosides, and allosterically inhibited by phosphoenolpyruvate. Catalyzes the phosphorylation of D-fructose 6-phosphate to fructose 1,6-bisphosphate by ATP, the first committing step of glycolysis. This is ATP-dependent 6-phosphofructokinase from Staphylococcus carnosus (strain TM300).